Consider the following 244-residue polypeptide: 5-oxoprolinase subunit A (244 aa).

The protein belongs to the LamB/PxpA family. Forms a complex composed of PxpA, PxpB and PxpC.

It catalyses the reaction 5-oxo-L-proline + ATP + 2 H2O = L-glutamate + ADP + phosphate + H(+). Catalyzes the cleavage of 5-oxoproline to form L-glutamate coupled to the hydrolysis of ATP to ADP and inorganic phosphate. The protein is 5-oxoprolinase subunit A of Escherichia coli (strain SE11).